The following is a 99-amino-acid chain: Large ribosomal subunit protein bL21 (99 aa).

This sequence belongs to the bacterial ribosomal protein bL21 family. Part of the 50S ribosomal subunit. Contacts protein L20.

Functionally, this protein binds to 23S rRNA in the presence of protein L20. This Mycoplasmopsis pulmonis (strain UAB CTIP) (Mycoplasma pulmonis) protein is Large ribosomal subunit protein bL21.